Consider the following 744-residue polypeptide: Protein zyg-11 homolog B (744 aa).

LRR repeat units follow at residues 185-208 (LPRL…LACK), 216-236 (MHHL…VREL), and 237-261 (KHLN…LLEQ).

The protein belongs to the zyg-11 family. In terms of assembly, (Microbial infection) Interacts with SARS-COV-2 protein ORF10. As to quaternary structure, interacts with ELOC/Elongin C. Part of an E3 ubiquitin ligase complex including ZYG11B, CUL2 and Elongin BC. Post-translationally, (Microbial infection) Ubiquitinated; leading to proteasomal degradation in the presence of herpes simplex virus 1/HHV-1.

Its subcellular location is the cytoplasm. In terms of biological role, serves as substrate adapter subunit in the E3 ubiquitin ligase complex ZYG11B-CUL2-Elongin BC. Acts to target substrates bearing N-terminal degrons for proteasomal degradation with the first four residues of substrates being the key recognition elements. Prefers Nt-Gly but also has the capacity to recognize Nt-Ser, -Ala and -Cys. Involved in the clearance of proteolytic fragments generated by caspase cleavage during apoptosis since N-terminal glycine degrons are strongly enriched at caspase cleavage sites. Also important in the quality control of protein N-myristoylation in which N-terminal glycine degrons are conditionally exposed after a failure of N-myristoylation. In addition, plays a role in the amplification of cGAS to enhance innate immune response. Mechanistically, strengthens the processes of cGAS binding with dsDNA and assembling oligomers and also accelerates and stabilizes cGAS-DNA condensation, thereby enhancing production of antiviral IFNs and inflammatory cytokines. The sequence is that of Protein zyg-11 homolog B from Homo sapiens (Human).